We begin with the raw amino-acid sequence, 157 residues long: SsrA-binding protein (157 aa).

Residues 132–157 (VHDKRQAQKDKDWAREKDRLFKKAYK) are disordered. Residues 135–157 (KRQAQKDKDWAREKDRLFKKAYK) show a composition bias toward basic and acidic residues.

It belongs to the SmpB family.

The protein resides in the cytoplasm. In terms of biological role, required for rescue of stalled ribosomes mediated by trans-translation. Binds to transfer-messenger RNA (tmRNA), required for stable association of tmRNA with ribosomes. tmRNA and SmpB together mimic tRNA shape, replacing the anticodon stem-loop with SmpB. tmRNA is encoded by the ssrA gene; the 2 termini fold to resemble tRNA(Ala) and it encodes a 'tag peptide', a short internal open reading frame. During trans-translation Ala-aminoacylated tmRNA acts like a tRNA, entering the A-site of stalled ribosomes, displacing the stalled mRNA. The ribosome then switches to translate the ORF on the tmRNA; the nascent peptide is terminated with the 'tag peptide' encoded by the tmRNA and targeted for degradation. The ribosome is freed to recommence translation, which seems to be the essential function of trans-translation. The protein is SsrA-binding protein of Francisella tularensis subsp. novicida (strain U112).